We begin with the raw amino-acid sequence, 271 residues long: Large ribosomal subunit protein uL3c (271 aa).

The transit peptide at 1-49 directs the protein to the chloroplast; that stretch reads MAIAMAVVSFPSLLNKTTLSSSLFTPTFLPAKSSSLLIKSSPKTRFVVS. The interval 190-222 is disordered; sequence HGSKSHRALGSIGAGTTPGRVYKGKKMPGRMGG.

Belongs to the universal ribosomal protein uL3 family. In terms of assembly, part of the 50S ribosomal subunit.

The protein localises to the plastid. The protein resides in the chloroplast. Its function is as follows. One of the primary rRNA binding proteins, it binds directly near the 3'-end of the 23S rRNA, where it nucleates assembly of the 50S subunit. In Arabidopsis thaliana (Mouse-ear cress), this protein is Large ribosomal subunit protein uL3c (RPL3A).